A 456-amino-acid polypeptide reads, in one-letter code: Crinkler effector protein 2 (456 aa).

The first 17 residues, methionine 1 to proline 17, serve as a signal peptide directing secretion. Residues valine 18 to lysine 54 are LQLFLAK domain. The DWL domain stretch occupies residues glutamine 55 to isoleucine 136. The HVLVXXP motif signature appears at histidine 137–proline 143. The N-linked (GlcNAc...) asparagine glycan is linked to asparagine 338.

Belongs to the Crinkler effector family.

The protein localises to the secreted. It localises to the host nucleus. Functionally, secreted effector that effector that induces cell death when expressed in host plants. Induces the expression of defense response genes in tomato. The chain is Crinkler effector protein 2 from Phytophthora infestans (Potato late blight agent).